The chain runs to 28 residues: Cyclotide vodo I2 (28 aa).

Disulfide bonds link cysteine 4–cysteine 18, cysteine 8–cysteine 20, and cysteine 13–cysteine 25.

This is a cyclic peptide. Post-translationally, contains 3 disulfide bonds.

In terms of biological role, probably participates in a plant defense mechanism. The protein is Cyclotide vodo I2 of Viola odorata (Sweet violet).